Consider the following 434-residue polypeptide: Nucleobase transporter PlUacP (434 aa).

12 helical membrane-spanning segments follow: residues 9-29 (LGFQ…LIVG), 39-59 (LAYL…LQVW), 63-83 (FFGI…GPMI), 93-113 (AIYG…GFFG), 118-138 (FFPP…LIPV), 159-179 (ALSF…TGFI), 181-201 (AISI…MGKV), 218-238 (FYFG…LVAI), 306-326 (VVIT…IAAL), 327-347 (TLLI…GMVV), 365-385 (LLII…PNLF), and 394-414 (ILTS…NFLF).

Belongs to the nucleobase:cation symporter-2 (NCS2) (TC 2.A.40) family.

It is found in the cell membrane. With respect to regulation, inhibited by the proton gradient disruptor carbonyl cyanide m-chlorophenylhydrazone (CCCP), but not by the sodium gradient disruptor ouabain. Hypoxanthine, xanthine, cytosine and uric acid act as competitive inhibitors. Functionally, uptake of the purines adenine and guanine, and the pyrimidine uracil. Transport is probably proton-dependent. The polypeptide is Nucleobase transporter PlUacP (Paenibacillus larvae subsp. larvae (strain NRRL B-3650 / LMG 16245)).